Here is a 358-residue protein sequence, read N- to C-terminus: uncharacterized protein (358 aa).

Residue 29–36 (GPINSGKT) participates in ATP binding.

Belongs to the archaeal ATPase family.

This is an uncharacterized protein from Methanocaldococcus jannaschii (strain ATCC 43067 / DSM 2661 / JAL-1 / JCM 10045 / NBRC 100440) (Methanococcus jannaschii).